The primary structure comprises 502 residues: Maturase K (502 aa).

Belongs to the intron maturase 2 family. MatK subfamily.

Its subcellular location is the plastid. It localises to the chloroplast. Usually encoded in the trnK tRNA gene intron. Probably assists in splicing its own and other chloroplast group II introns. The chain is Maturase K from Cephalotaxus fortunei (Chinese plum-yew).